Consider the following 98-residue polypeptide: NADH-ubiquinone oxidoreductase chain 4L (98 aa).

3 helical membrane-spanning segments follow: residues 1-21, 29-49, and 61-81; these read MSIT…GMFT, SLLC…IVSL, and VILL…LVMV.

The protein belongs to the complex I subunit 4L family. In terms of assembly, core subunit of respiratory chain NADH dehydrogenase (Complex I) which is composed of 45 different subunits.

The protein resides in the mitochondrion inner membrane. It carries out the reaction a ubiquinone + NADH + 5 H(+)(in) = a ubiquinol + NAD(+) + 4 H(+)(out). Its function is as follows. Core subunit of the mitochondrial membrane respiratory chain NADH dehydrogenase (Complex I) which catalyzes electron transfer from NADH through the respiratory chain, using ubiquinone as an electron acceptor. Part of the enzyme membrane arm which is embedded in the lipid bilayer and involved in proton translocation. The chain is NADH-ubiquinone oxidoreductase chain 4L (MT-ND4L) from Ochotona collaris (Collared pika).